Reading from the N-terminus, the 141-residue chain is Small ribosomal subunit protein uS12 (141 aa).

The residue at position 102 (Asp102) is a 3-methylthioaspartic acid. Residues 115–141 (GDASGVEKRRQQRSLYGAKRPKKEASK) are disordered.

It belongs to the universal ribosomal protein uS12 family. As to quaternary structure, part of the 30S ribosomal subunit. Contacts proteins S8 and S17. May interact with IF1 in the 30S initiation complex.

With S4 and S5 plays an important role in translational accuracy. Its function is as follows. Interacts with and stabilizes bases of the 16S rRNA that are involved in tRNA selection in the A site and with the mRNA backbone. Located at the interface of the 30S and 50S subunits, it traverses the body of the 30S subunit contacting proteins on the other side and probably holding the rRNA structure together. The combined cluster of proteins S8, S12 and S17 appears to hold together the shoulder and platform of the 30S subunit. The chain is Small ribosomal subunit protein uS12 from Ureaplasma parvum serovar 3 (strain ATCC 27815 / 27 / NCTC 11736).